The chain runs to 244 residues: GTP cyclohydrolase 1 type 2 homolog (244 aa).

A divalent metal cation contacts are provided by histidine 65, histidine 66, aspartate 102, histidine 216, and glutamate 220.

The protein belongs to the GTP cyclohydrolase I type 2/NIF3 family. As to quaternary structure, homohexamer; trimer of dimers, that forms a hollow cage-like architecture.

Functionally, DNA-binding protein exhibiting the ability to bind to both single-stranded and double-stranded DNA. The polypeptide is GTP cyclohydrolase 1 type 2 homolog (Methanocaldococcus jannaschii (strain ATCC 43067 / DSM 2661 / JAL-1 / JCM 10045 / NBRC 100440) (Methanococcus jannaschii)).